A 698-amino-acid polypeptide reads, in one-letter code: Ion-translocating oxidoreductase complex subunit C (698 aa).

2 4Fe-4S ferredoxin-type domains span residues 366–397 (TEMG…QQLY) and 407–436 (KARN…VQYY). [4Fe-4S] cluster is bound by residues Cys-377, Cys-380, Cys-383, Cys-387, Cys-416, Cys-419, Cys-422, and Cys-426.

It belongs to the 4Fe4S bacterial-type ferredoxin family. RnfC subfamily. As to quaternary structure, the complex is composed of six subunits: RnfA, RnfB, RnfC, RnfD, RnfE and RnfG. It depends on [4Fe-4S] cluster as a cofactor.

The protein resides in the cell inner membrane. Functionally, part of a membrane-bound complex that couples electron transfer with translocation of ions across the membrane. In Yersinia pseudotuberculosis serotype O:1b (strain IP 31758), this protein is Ion-translocating oxidoreductase complex subunit C.